The primary structure comprises 360 residues: Phosphoserine aminotransferase (360 aa).

Arginine 41 contacts L-glutamate. Pyridoxal 5'-phosphate-binding residues include tryptophan 101, threonine 152, aspartate 172, and glutamine 195. Lysine 196 carries the post-translational modification N6-(pyridoxal phosphate)lysine. Residue 237 to 238 coordinates pyridoxal 5'-phosphate; the sequence is NT.

The protein belongs to the class-V pyridoxal-phosphate-dependent aminotransferase family. SerC subfamily. Homodimer. The cofactor is pyridoxal 5'-phosphate.

It is found in the cytoplasm. It carries out the reaction O-phospho-L-serine + 2-oxoglutarate = 3-phosphooxypyruvate + L-glutamate. It catalyses the reaction 4-(phosphooxy)-L-threonine + 2-oxoglutarate = (R)-3-hydroxy-2-oxo-4-phosphooxybutanoate + L-glutamate. It functions in the pathway amino-acid biosynthesis; L-serine biosynthesis; L-serine from 3-phospho-D-glycerate: step 2/3. The protein operates within cofactor biosynthesis; pyridoxine 5'-phosphate biosynthesis; pyridoxine 5'-phosphate from D-erythrose 4-phosphate: step 3/5. In terms of biological role, catalyzes the reversible conversion of 3-phosphohydroxypyruvate to phosphoserine and of 3-hydroxy-2-oxo-4-phosphonooxybutanoate to phosphohydroxythreonine. The polypeptide is Phosphoserine aminotransferase (Burkholderia vietnamiensis (strain G4 / LMG 22486) (Burkholderia cepacia (strain R1808))).